The following is a 194-amino-acid chain: Early E3 22.1 kDa glycoprotein (194 aa).

6 N-linked (GlcNAc...) asparagine; by host glycosylation sites follow: Asn-19, Asn-60, Asn-75, Asn-87, Asn-125, and Asn-138.

In Canine adenovirus serotype 1 (strain RI261) (CAdV-1), this protein is Early E3 22.1 kDa glycoprotein.